The chain runs to 324 residues: D-alanine--D-alanine ligase (324 aa).

In terms of domain architecture, ATP-grasp spans 121 to 321; sequence NQYLKAFGVR…IKDVMTDIIE (201 aa). 149–204 is a binding site for ATP; that stretch reads VEKIGLPCFIKPNLGGSSFGVTKVKTREQIQPAIAKAFSEAEEVMIEAFMGGTELT. Mg(2+) is bound by residues Asp-275, Glu-288, and Asn-290.

The protein belongs to the D-alanine--D-alanine ligase family. Requires Mg(2+) as cofactor. Mn(2+) serves as cofactor.

The protein localises to the cytoplasm. It carries out the reaction 2 D-alanine + ATP = D-alanyl-D-alanine + ADP + phosphate + H(+). The protein operates within cell wall biogenesis; peptidoglycan biosynthesis. Cell wall formation. In Bacteroides fragilis (strain YCH46), this protein is D-alanine--D-alanine ligase.